Reading from the N-terminus, the 201-residue chain is MAVIFNNKQLLADNSIEKGGELFLFNGSYNILESYVNPVLLKNGVIELEEAAYYAGNILYKTDDPKFIDYINLIIKATHSEELPENSTVVNYRKTMRSGTIHPIKKDIYIYDNKKFTLYDRYIYGYDNNYVNFYEEKNEKEKEYEEEDDKASSLCENKIILSQINCESFENDFKYYLSDYNYAFSIIDNTTNVLVAFGLYR.

Its function is as follows. May have a role in tissue tropism within the insect larvae. This is an uncharacterized protein from Lepidoptera (butterflies and moths).